Here is a 671-residue protein sequence, read N- to C-terminus: DNA ligase (671 aa).

NAD(+) contacts are provided by residues 32–36, 81–82, and E113; these read DAEYD and SL. K115 (N6-AMP-lysine intermediate) is an active-site residue. Residues R136, E173, K290, and K314 each contribute to the NAD(+) site. 4 residues coordinate Zn(2+): C408, C411, C426, and C432. Residues 593–671 form the BRCT domain; it reads EIDSPFAGKT…ETEMLRLLGS (79 aa).

It belongs to the NAD-dependent DNA ligase family. LigA subfamily. Requires Mg(2+) as cofactor. Mn(2+) is required as a cofactor.

The enzyme catalyses NAD(+) + (deoxyribonucleotide)n-3'-hydroxyl + 5'-phospho-(deoxyribonucleotide)m = (deoxyribonucleotide)n+m + AMP + beta-nicotinamide D-nucleotide.. Functionally, DNA ligase that catalyzes the formation of phosphodiester linkages between 5'-phosphoryl and 3'-hydroxyl groups in double-stranded DNA using NAD as a coenzyme and as the energy source for the reaction. It is essential for DNA replication and repair of damaged DNA. The chain is DNA ligase from Escherichia coli O81 (strain ED1a).